A 140-amino-acid polypeptide reads, in one-letter code: Fluoride-specific ion channel FluC 2 (140 aa).

The next 4 membrane-spanning stretches (helical) occupy residues 7–27 (VPPL…LGAL), 45–65 (WATF…MVLV), 77–97 (PFAG…GLEI), and 106–126 (VLEA…GVVL). Na(+) contacts are provided by G85 and T88.

The protein belongs to the fluoride channel Fluc/FEX (TC 1.A.43) family.

The protein resides in the cell membrane. It catalyses the reaction fluoride(in) = fluoride(out). With respect to regulation, na(+) is not transported, but it plays an essential structural role and its presence is essential for fluoride channel function. Fluoride-specific ion channel. Important for reducing fluoride concentration in the cell, thus reducing its toxicity. The protein is Fluoride-specific ion channel FluC 2 of Nocardia farcinica (strain IFM 10152).